We begin with the raw amino-acid sequence, 185 residues long: uncharacterized protein (185 aa).

The first 29 residues, 1–29, serve as a signal peptide directing secretion; that stretch reads MKLFSRTSLVALGTAAAITLSGVTAPAFA. The disordered stretch occupies residues 41 to 66; that stretch reads KTAEDNTPEAPGASTPLKLEQPGTIT.

Glycosylated; by Pmt.

It localises to the secreted. This is an uncharacterized protein from Corynebacterium glutamicum (strain ATCC 13032 / DSM 20300 / JCM 1318 / BCRC 11384 / CCUG 27702 / LMG 3730 / NBRC 12168 / NCIMB 10025 / NRRL B-2784 / 534).